A 518-amino-acid polypeptide reads, in one-letter code: 2-isopropylmalate synthase (518 aa).

The region spanning 4 to 266 is the Pyruvate carboxyltransferase domain; sequence INVFDTTLRD…DSSLNLHELK (263 aa). Aspartate 13, histidine 201, histidine 203, and asparagine 237 together coordinate Mn(2+). Residues 391–518 form a regulatory domain region; it reads EFLSLQVHYG…GLKRQTAVGS (128 aa).

It belongs to the alpha-IPM synthase/homocitrate synthase family. LeuA type 1 subfamily. As to quaternary structure, homodimer. Requires Mn(2+) as cofactor.

The protein localises to the cytoplasm. The enzyme catalyses 3-methyl-2-oxobutanoate + acetyl-CoA + H2O = (2S)-2-isopropylmalate + CoA + H(+). The protein operates within amino-acid biosynthesis; L-leucine biosynthesis; L-leucine from 3-methyl-2-oxobutanoate: step 1/4. Its function is as follows. Catalyzes the condensation of the acetyl group of acetyl-CoA with 3-methyl-2-oxobutanoate (2-ketoisovalerate) to form 3-carboxy-3-hydroxy-4-methylpentanoate (2-isopropylmalate). This chain is 2-isopropylmalate synthase, found in Bacillus velezensis (strain DSM 23117 / BGSC 10A6 / LMG 26770 / FZB42) (Bacillus amyloliquefaciens subsp. plantarum).